The primary structure comprises 166 residues: MLKEDLINSGAIKFGDFVLTSGKRSGYYIDIKSAYTDPKILDEIGLEISGMVKSGKIAGMELGSVPILVSVSIKTKRPFVIIRKDDLKHGTRKRYIGSINLNEEIDIIDDVATTGGSIMKAAEIIRNNGGIVKRAICVVDREEGAAEMLKENNIELYSIIKASELR.

5-phospho-alpha-D-ribose 1-diphosphate contacts are provided by residues Arg-83, Lys-84, His-89, and 109 to 117 (DDVATTGGS). Positions 113 and 141 each coordinate orotate.

It belongs to the purine/pyrimidine phosphoribosyltransferase family. PyrE subfamily. In terms of assembly, homodimer. It depends on Mg(2+) as a cofactor.

It catalyses the reaction orotidine 5'-phosphate + diphosphate = orotate + 5-phospho-alpha-D-ribose 1-diphosphate. It functions in the pathway pyrimidine metabolism; UMP biosynthesis via de novo pathway; UMP from orotate: step 1/2. Catalyzes the transfer of a ribosyl phosphate group from 5-phosphoribose 1-diphosphate to orotate, leading to the formation of orotidine monophosphate (OMP). The sequence is that of Orotate phosphoribosyltransferase from Picrophilus torridus (strain ATCC 700027 / DSM 9790 / JCM 10055 / NBRC 100828 / KAW 2/3).